Reading from the N-terminus, the 337-residue chain is Acetyl-coenzyme A synthetase (337 aa).

CoA is bound by residues 131 to 134 (RGGR), Thr-249, and Asn-273. Position 325 to 327 (325 to 327 (GEP)) interacts with ATP.

This sequence belongs to the ATP-dependent AMP-binding enzyme family. The cofactor is Mg(2+). In terms of processing, acetylated. Deacetylation by the SIR2-homolog deacetylase activates the enzyme.

It catalyses the reaction acetate + ATP + CoA = acetyl-CoA + AMP + diphosphate. Functionally, catalyzes the conversion of acetate into acetyl-CoA (AcCoA), an essential intermediate at the junction of anabolic and catabolic pathways. AcsA undergoes a two-step reaction. In the first half reaction, AcsA combines acetate with ATP to form acetyl-adenylate (AcAMP) intermediate. In the second half reaction, it can then transfer the acetyl group from AcAMP to the sulfhydryl group of CoA, forming the product AcCoA. The sequence is that of Acetyl-coenzyme A synthetase (acsA) from Nostoc linckia.